Consider the following 226-residue polypeptide: 2-C-methyl-D-erythritol 4-phosphate cytidylyltransferase (226 aa).

The protein belongs to the IspD/TarI cytidylyltransferase family. IspD subfamily.

The enzyme catalyses 2-C-methyl-D-erythritol 4-phosphate + CTP + H(+) = 4-CDP-2-C-methyl-D-erythritol + diphosphate. It functions in the pathway isoprenoid biosynthesis; isopentenyl diphosphate biosynthesis via DXP pathway; isopentenyl diphosphate from 1-deoxy-D-xylulose 5-phosphate: step 2/6. In terms of biological role, catalyzes the formation of 4-diphosphocytidyl-2-C-methyl-D-erythritol from CTP and 2-C-methyl-D-erythritol 4-phosphate (MEP). This chain is 2-C-methyl-D-erythritol 4-phosphate cytidylyltransferase, found in Prochlorococcus marinus (strain MIT 9312).